The sequence spans 370 residues: Phosphoserine aminotransferase (370 aa).

Residue arginine 38 coordinates L-glutamate. The pyridoxal 5'-phosphate site is built by tryptophan 101, threonine 143, aspartate 166, and glutamine 189. The residue at position 190 (lysine 190) is an N6-(pyridoxal phosphate)lysine. 243 to 244 (NT) is a pyridoxal 5'-phosphate binding site.

Belongs to the class-V pyridoxal-phosphate-dependent aminotransferase family. SerC subfamily. Homodimer. Pyridoxal 5'-phosphate is required as a cofactor.

Its subcellular location is the cytoplasm. It catalyses the reaction O-phospho-L-serine + 2-oxoglutarate = 3-phosphooxypyruvate + L-glutamate. The enzyme catalyses 4-(phosphooxy)-L-threonine + 2-oxoglutarate = (R)-3-hydroxy-2-oxo-4-phosphooxybutanoate + L-glutamate. Its pathway is amino-acid biosynthesis; L-serine biosynthesis; L-serine from 3-phospho-D-glycerate: step 2/3. It participates in cofactor biosynthesis; pyridoxine 5'-phosphate biosynthesis; pyridoxine 5'-phosphate from D-erythrose 4-phosphate: step 3/5. In terms of biological role, catalyzes the reversible conversion of 3-phosphohydroxypyruvate to phosphoserine and of 3-hydroxy-2-oxo-4-phosphonooxybutanoate to phosphohydroxythreonine. In Methanosarcina mazei (strain ATCC BAA-159 / DSM 3647 / Goe1 / Go1 / JCM 11833 / OCM 88) (Methanosarcina frisia), this protein is Phosphoserine aminotransferase.